A 479-amino-acid polypeptide reads, in one-letter code: Replication factor C large subunit (479 aa).

56–63 (GPPGVGKT) serves as a coordination point for ATP. The span at 435–461 (LGEKPLEPQEAKARRRGEKASRDEGRK) shows a compositional bias: basic and acidic residues. Residues 435–479 (LGEKPLEPQEAKARRRGEKASRDEGRKAGKRERKGVGLDFFLGEQ) form a disordered region.

This sequence belongs to the activator 1 small subunits family. RfcL subfamily. Heteromultimer composed of small subunits (RfcS) and large subunits (RfcL).

Part of the RFC clamp loader complex which loads the PCNA sliding clamp onto DNA. This chain is Replication factor C large subunit, found in Aeropyrum pernix (strain ATCC 700893 / DSM 11879 / JCM 9820 / NBRC 100138 / K1).